Consider the following 396-residue polypeptide: Argininosuccinate synthase (396 aa).

ATP contacts are provided by residues 10 to 18 (AYSGGLDTS) and Ala-37. Positions 88 and 93 each coordinate L-citrulline. An ATP-binding site is contributed by Gly-118. Residues Thr-120, Asn-124, and Asp-125 each coordinate L-aspartate. L-citrulline is bound at residue Asn-124. L-citrulline contacts are provided by Arg-128, Ser-176, Ser-185, Glu-261, and Tyr-273.

Belongs to the argininosuccinate synthase family. Type 1 subfamily. Homotetramer.

The protein localises to the cytoplasm. It catalyses the reaction L-citrulline + L-aspartate + ATP = 2-(N(omega)-L-arginino)succinate + AMP + diphosphate + H(+). It functions in the pathway amino-acid biosynthesis; L-arginine biosynthesis; L-arginine from L-ornithine and carbamoyl phosphate: step 2/3. The chain is Argininosuccinate synthase from Nitratidesulfovibrio vulgaris (strain ATCC 29579 / DSM 644 / CCUG 34227 / NCIMB 8303 / VKM B-1760 / Hildenborough) (Desulfovibrio vulgaris).